A 357-amino-acid chain; its full sequence is DNA replication and repair protein RecF (357 aa).

Residue 30–37 coordinates ATP; the sequence is GANGSGKT.

This sequence belongs to the RecF family.

The protein localises to the cytoplasm. Functionally, the RecF protein is involved in DNA metabolism; it is required for DNA replication and normal SOS inducibility. RecF binds preferentially to single-stranded, linear DNA. It also seems to bind ATP. This is DNA replication and repair protein RecF from Escherichia coli O7:K1 (strain IAI39 / ExPEC).